The chain runs to 250 residues: Pyrroloquinoline-quinone synthase (250 aa).

It belongs to the PqqC family.

The catalysed reaction is 6-(2-amino-2-carboxyethyl)-7,8-dioxo-1,2,3,4,7,8-hexahydroquinoline-2,4-dicarboxylate + 3 O2 = pyrroloquinoline quinone + 2 H2O2 + 2 H2O + H(+). Its pathway is cofactor biosynthesis; pyrroloquinoline quinone biosynthesis. Ring cyclization and eight-electron oxidation of 3a-(2-amino-2-carboxyethyl)-4,5-dioxo-4,5,6,7,8,9-hexahydroquinoline-7,9-dicarboxylic-acid to PQQ. The chain is Pyrroloquinoline-quinone synthase from Xanthomonas oryzae pv. oryzae (strain MAFF 311018).